The primary structure comprises 93 residues: Small ribosomal subunit protein uS19 (93 aa).

It belongs to the universal ribosomal protein uS19 family.

Its function is as follows. Protein S19 forms a complex with S13 that binds strongly to the 16S ribosomal RNA. The polypeptide is Small ribosomal subunit protein uS19 (Geotalea daltonii (strain DSM 22248 / JCM 15807 / FRC-32) (Geobacter daltonii)).